Here is a 295-residue protein sequence, read N- to C-terminus: MNVKEEIDIVIITGMSGAGKTVAVQSLEDLGYFCVDNLPPALIPKFIELIESSSGKMNKLALVIDLRGQTFFDQLFESIDLLDQSSLSKYNIQILFLDAKDAKLVQRYKETRRSHPLAKHGLPLDGIKKERELLEDLKGRAQQIIDTTDLKPIQLREKIIQRFSCEEHHSFTVNMMSFGFKYGIPIDADLVFDVRFLPNPHYVDHLRPKTGLEGEVSSYVLKWTETQQFIEKLEDLLSFMLPQYKREGKSQVVIGIGCTGGKHRSVTLAEHFAKVFANEYMMHVSHRDVEKGKER.

14-21 (GMSGAGKT) lines the ATP pocket. 65 to 68 (DLRG) provides a ligand contact to GTP.

The protein belongs to the RapZ-like family.

Displays ATPase and GTPase activities. The sequence is that of Nucleotide-binding protein BH3569 from Halalkalibacterium halodurans (strain ATCC BAA-125 / DSM 18197 / FERM 7344 / JCM 9153 / C-125) (Bacillus halodurans).